Reading from the N-terminus, the 525-residue chain is Cytochrome P450 750A1 (525 aa).

A helical membrane pass occupies residues 13–33; that stretch reads PLPLPAILIATFIFFFSCWIL. A heme-binding site is contributed by Cys-465.

The protein belongs to the cytochrome P450 family. Requires heme as cofactor.

It is found in the membrane. This chain is Cytochrome P450 750A1 (CYP750A1), found in Pinus taeda (Loblolly pine).